The chain runs to 99 residues: MAVNPLDFLKNMSSVKNNIDNIKKEISKITVCGKAGSNIVAIEMDGEFNVKKVSINKEFFDDLDNDAFEQMIKSALNDAVSKVKEEIKLKTMGVLPFGM.

The protein belongs to the YbaB/EbfC family. Homodimer.

It is found in the cytoplasm. The protein resides in the nucleoid. Binds to DNA and alters its conformation. May be involved in regulation of gene expression, nucleoid organization and DNA protection. The chain is Nucleoid-associated protein EbfC from Borreliella burgdorferi (strain ZS7) (Borrelia burgdorferi).